The chain runs to 105 residues: Protein METHYLENE BLUE SENSITIVITY 1 (105 aa).

The tract at residues 26–46 (RGGGKAGIADRTGKEKGGHAK) is disordered. Over residues 36 to 46 (RTGKEKGGHAK) the composition is skewed to basic and acidic residues.

Mainly expressed in the epidermis.

It localises to the nucleus. It is found in the cytoplasm. The protein resides in the stress granule. Required for acclimation to reactive oxygen species (ROS) responses downstream of beta-cyclocitral (beta-cc) or mediated by dihydroactinidiolide, including singlet oxygen 1O(2) detoxification reactions, especially upon light-mediated photooxidative stress, and leading to programmed cell death. Prevents leaf senescence. Involved in cold acclimation. The chain is Protein METHYLENE BLUE SENSITIVITY 1 from Arabidopsis thaliana (Mouse-ear cress).